The following is a 296-amino-acid chain: Nucleotide-binding protein RSc0403 (296 aa).

Position 8–15 (8–15 (GMSGSGKS)) interacts with ATP. 57–60 (DIRS) contributes to the GTP binding site. The interval 99–124 (TRRRHPLSIRNGRPDAGNPPSAAKGP) is disordered.

This sequence belongs to the RapZ-like family.

Its function is as follows. Displays ATPase and GTPase activities. The sequence is that of Nucleotide-binding protein RSc0403 from Ralstonia nicotianae (strain ATCC BAA-1114 / GMI1000) (Ralstonia solanacearum).